Here is a 702-residue protein sequence, read N- to C-terminus: Threonine--tRNA ligase (702 aa).

Residues 1–30 (MSAPVHPVPGADGGDPLRPATPGLRSPQVP) form a disordered region. Positions 15 to 84 (DPLRPATPGL…DVDVEVTPVP (70 aa)) constitute a TGS domain. The tract at residues 279 to 585 (DHRKLGIELD…LTEHYAGAFP (307 aa)) is catalytic. Zn(2+)-binding residues include Cys-384, His-435, and His-562.

It belongs to the class-II aminoacyl-tRNA synthetase family. In terms of assembly, homodimer. Zn(2+) is required as a cofactor.

The protein resides in the cytoplasm. The catalysed reaction is tRNA(Thr) + L-threonine + ATP = L-threonyl-tRNA(Thr) + AMP + diphosphate + H(+). Functionally, catalyzes the attachment of threonine to tRNA(Thr) in a two-step reaction: L-threonine is first activated by ATP to form Thr-AMP and then transferred to the acceptor end of tRNA(Thr). Also edits incorrectly charged L-seryl-tRNA(Thr). In Mycobacterium leprae (strain Br4923), this protein is Threonine--tRNA ligase.